Here is a 211-residue protein sequence, read N- to C-terminus: ATP phosphoribosyltransferase (211 aa).

Belongs to the ATP phosphoribosyltransferase family. Short subfamily. Heteromultimer composed of HisG and HisZ subunits.

The protein localises to the cytoplasm. It carries out the reaction 1-(5-phospho-beta-D-ribosyl)-ATP + diphosphate = 5-phospho-alpha-D-ribose 1-diphosphate + ATP. It functions in the pathway amino-acid biosynthesis; L-histidine biosynthesis; L-histidine from 5-phospho-alpha-D-ribose 1-diphosphate: step 1/9. In terms of biological role, catalyzes the condensation of ATP and 5-phosphoribose 1-diphosphate to form N'-(5'-phosphoribosyl)-ATP (PR-ATP). Has a crucial role in the pathway because the rate of histidine biosynthesis seems to be controlled primarily by regulation of HisG enzymatic activity. This chain is ATP phosphoribosyltransferase, found in Pseudomonas syringae pv. tomato (strain ATCC BAA-871 / DC3000).